Reading from the N-terminus, the 122-residue chain is Large ribosomal subunit protein bL12 (122 aa).

Belongs to the bacterial ribosomal protein bL12 family. In terms of assembly, homodimer. Part of the ribosomal stalk of the 50S ribosomal subunit. Forms a multimeric L10(L12)X complex, where L10 forms an elongated spine to which 2 to 4 L12 dimers bind in a sequential fashion. Binds GTP-bound translation factors.

Forms part of the ribosomal stalk which helps the ribosome interact with GTP-bound translation factors. Is thus essential for accurate translation. This Buchnera aphidicola subsp. Cinara cedri (strain Cc) protein is Large ribosomal subunit protein bL12.